Reading from the N-terminus, the 312-residue chain is Methionyl-tRNA formyltransferase (312 aa).

109 to 112 contributes to the (6S)-5,6,7,8-tetrahydrofolate binding site; that stretch reads SLLP.

It belongs to the Fmt family.

The enzyme catalyses L-methionyl-tRNA(fMet) + (6R)-10-formyltetrahydrofolate = N-formyl-L-methionyl-tRNA(fMet) + (6S)-5,6,7,8-tetrahydrofolate + H(+). Functionally, attaches a formyl group to the free amino group of methionyl-tRNA(fMet). The formyl group appears to play a dual role in the initiator identity of N-formylmethionyl-tRNA by promoting its recognition by IF2 and preventing the misappropriation of this tRNA by the elongation apparatus. This chain is Methionyl-tRNA formyltransferase, found in Nitrosospira multiformis (strain ATCC 25196 / NCIMB 11849 / C 71).